A 212-amino-acid polypeptide reads, in one-letter code: Ribonuclease HII (212 aa).

In terms of domain architecture, RNase H type-2 spans 28-212; sequence SLIAGIDEVG…KSFAPVRQVF (185 aa). A divalent metal cation is bound by residues aspartate 34, glutamate 35, and aspartate 127.

It belongs to the RNase HII family. Mn(2+) is required as a cofactor. Requires Mg(2+) as cofactor.

The protein resides in the cytoplasm. It catalyses the reaction Endonucleolytic cleavage to 5'-phosphomonoester.. Endonuclease that specifically degrades the RNA of RNA-DNA hybrids. This chain is Ribonuclease HII, found in Chlamydia abortus (strain DSM 27085 / S26/3) (Chlamydophila abortus).